Reading from the N-terminus, the 741-residue chain is Cellulose 1,4-beta-cellobiosidase (reducing end) CelS (741 aa).

The first 27 residues, 1-27, serve as a signal peptide directing secretion; it reads MVKSRKISILLAVAMLVSIMIPTTAFA. E76 is a substrate binding site. E87 functions as the Proton donor in the catalytic mechanism. Residues T140, N204, D241, Q247, and 251-252 contribute to the substrate site; that span reads TN. Catalysis depends on D255, which acts as the Nucleophile. Substrate contacts are provided by residues 301–302, 326–327, Y421, D520, and 645–646; these read KY, WY, and WH. Residues 673 to 739 form the Dockerin domain; sequence STKLYGDVND…ILKEIDTLPY (67 aa). Ca(2+) contacts are provided by D679, N681, D683, G684, K685, D690, D711, L712, N713, D715, R717, and D722.

This sequence belongs to the glycosyl hydrolase 48 (cellulase L) family.

It localises to the secreted. It catalyses the reaction Hydrolysis of (1-&gt;4)-beta-D-glucosidic linkages in cellulose and similar substrates, releasing cellobiose from the reducing ends of the chains.. With respect to regulation, inhibited by cellobiose and lactose, but not by glucose. Functionally, this enzyme catalyzes the exohydrolysis of 1,4-beta-glucosidic linkages in cellulose with a preference for amorphous or crystalline cellulose over carboxymethyl cellulose. The protein is Cellulose 1,4-beta-cellobiosidase (reducing end) CelS (celS) of Acetivibrio thermocellus (strain ATCC 27405 / DSM 1237 / JCM 9322 / NBRC 103400 / NCIMB 10682 / NRRL B-4536 / VPI 7372) (Clostridium thermocellum).